Here is a 238-residue protein sequence, read N- to C-terminus: Androgen-induced gene 1 protein (238 aa).

Over 1–12 the chain is Cytoplasmic; that stretch reads MALVPCQVLRMA. The chain crosses the membrane as a helical span at residues 13 to 30; that stretch reads ILLSYCSILCNYKAIEMP. Over 31–44 the chain is Extracellular; that stretch reads SHQTYGGSWKFLTF. A helical membrane pass occupies residues 45–67; it reads IDLVIQAVFFGICVLTDLSSLLT. Residues 68-87 are Cytoplasmic-facing; it reads RGSGNQEQERQLKKLISLRD. Residues 88–110 form a helical membrane-spanning segment; sequence WMLAVLAFPVGVFVVAVFWIIYA. At 111-124 the chain is on the extracellular side; sequence YDREMIYPKLLDNF. A helical transmembrane segment spans residues 125-144; the sequence is IPGWLNHGMHTTVLPFILIE. The Cytoplasmic portion of the chain corresponds to 145–156; sequence MRTSHHQYPSRS. A helical membrane pass occupies residues 157 to 179; that stretch reads SGLTAICTFSVGYILWVCWVHHV. Over 180-193 the chain is Extracellular; that stretch reads TGMWVYPFLEHIGP. Residues 194 to 216 traverse the membrane as a helical segment; the sequence is GARIIFFGSTTILMNFLYLLGEV. Over 217–238 the chain is Cytoplasmic; the sequence is LNNYIWDTQKSMEEEKEKPKLE.

It belongs to the AIG1 family. As to expression, highly expressed in heart, ovary, testis, liver, and kidney, at lower levels in spleen, prostate, brain, skeletal muscle, pancreas, small intestine and colon, and undetected in peripheral blood leukocytes, thymus, lung and placenta. AIG1 expression is higher in hair follicles from males than from females.

Its subcellular location is the cell membrane. It carries out the reaction 9-hexadecanoyloxy-octadecanoate + H2O = 9-hydroxy-octadecanoate + hexadecanoate + H(+). The catalysed reaction is 12-hexadecanoyloxy-octadecanoate + H2O = 12-hydroxyoctadecanoate + hexadecanoate + H(+). The enzyme catalyses 9-(9Z-hexadecenoyloxy)-octadecanoate + H2O = (9Z)-hexadecenoate + 9-hydroxy-octadecanoate + H(+). It catalyses the reaction 12-(9Z-hexadecenoyloxy)-octadecanoate + H2O = 12-hydroxyoctadecanoate + (9Z)-hexadecenoate + H(+). It carries out the reaction 13-(9Z-hexadecenoyloxy)-octadecanoate + H2O = 13-hydroxy-octadecanoate + (9Z)-hexadecenoate + H(+). The catalysed reaction is 9-octadecanoyloxy-octadecanoate + H2O = 9-hydroxy-octadecanoate + octadecanoate + H(+). The enzyme catalyses 12-octadecanoyloxy-octadecanoate + H2O = 12-hydroxyoctadecanoate + octadecanoate + H(+). It catalyses the reaction 13-octadecanoyloxy-octadecanoate + H2O = 13-hydroxy-octadecanoate + octadecanoate + H(+). It carries out the reaction 9-(9Z-octadecenoyloxy)-octadecanoate + H2O = 9-hydroxy-octadecanoate + (9Z)-octadecenoate + H(+). The catalysed reaction is 12-(9Z-octadecenoyloxy)-octadecanoate + H2O = 12-hydroxyoctadecanoate + (9Z)-octadecenoate + H(+). The enzyme catalyses 13-(9Z-octadecenoyloxy)-octadecanoate + H2O = 13-hydroxy-octadecanoate + (9Z)-octadecenoate + H(+). It catalyses the reaction 5-(9Z-hexadecenoyloxy)-octadecanoate + H2O = 5-hydroxy-octadecanoate + (9Z)-hexadecenoate + H(+). With respect to regulation, inhibited by N-hydroxyhydantoin carbamate JJH260 and beta-lactone KC01. In terms of biological role, hydrolyzes bioactive fatty-acid esters of hydroxy-fatty acids (FAHFAs), but not other major classes of lipids. Show a preference for FAHFAs with branching distal from the carboxylate head group of the lipids. The chain is Androgen-induced gene 1 protein (AIG1) from Homo sapiens (Human).